Consider the following 452-residue polypeptide: Probable receptor-like protein kinase At5g20050 (452 aa).

The signal sequence occupies residues 1 to 23 (MEDKKANIIATILILALVVVIIA). Over 24–33 (ARVSLKLSKT) the chain is Extracellular. The chain crosses the membrane as a helical span at residues 34-54 (FYLIAGVDISLILAVICFLII). The Cytoplasmic segment spans residues 55 to 452 (RSRYNKERKL…SSIISPISPR (398 aa)). Residues 103 to 392 (DGFRSLIGKG…MVIEMLEGRV (290 aa)) form the Protein kinase domain. Residues 109–117 (IGKGGSGSV) and K131 each bind ATP. Position 178 is a phosphotyrosine (Y178). The Proton acceptor role is filled by D236. Residues T270 and T275 each carry the phosphothreonine modification.

The protein belongs to the protein kinase superfamily. Ser/Thr protein kinase family.

Its subcellular location is the membrane. The catalysed reaction is L-seryl-[protein] + ATP = O-phospho-L-seryl-[protein] + ADP + H(+). It carries out the reaction L-threonyl-[protein] + ATP = O-phospho-L-threonyl-[protein] + ADP + H(+). The chain is Probable receptor-like protein kinase At5g20050 from Arabidopsis thaliana (Mouse-ear cress).